The primary structure comprises 450 residues: Glycerol dehydrogenase 1 (450 aa).

Residues aspartate 99, 155–159 (GKTMD), and 177–180 (TTAS) contribute to the NAD(+) site. Aspartate 182 contacts substrate. Residues serine 186, leucine 188, and tyrosine 192 each contribute to the NAD(+) site. Residues aspartate 232, histidine 315, and histidine 333 each contribute to the substrate site. 3 residues coordinate Zn(2+): aspartate 232, histidine 315, and histidine 333.

Belongs to the iron-containing alcohol dehydrogenase family. Zn(2+) is required as a cofactor.

It localises to the mitochondrion. The catalysed reaction is glycerol + NAD(+) = dihydroxyacetone + NADH + H(+). It functions in the pathway polyol metabolism; glycerol fermentation; glycerone phosphate from glycerol (oxidative route): step 1/2. Functionally, glycerol dehydrogenase involved in the assimilation of glycerol. The chain is Glycerol dehydrogenase 1 (gld1) from Schizosaccharomyces pombe (strain 972 / ATCC 24843) (Fission yeast).